An 83-amino-acid chain; its full sequence is UPF0297 protein CKR_1221 (83 aa).

This sequence belongs to the UPF0297 family.

This Clostridium kluyveri (strain NBRC 12016) protein is UPF0297 protein CKR_1221.